Here is a 109-residue protein sequence, read N- to C-terminus: Parvalbumin alpha (109 aa).

2 consecutive EF-hand domains span residues 38–73 and 77–109; these read KSKE…FTPE and LSDK…VSES. Asp51, Asp53, Ser55, Phe57, Glu59, Glu62, Asp90, Asp92, Asp94, Lys96, and Glu101 together coordinate Ca(2+).

This sequence belongs to the parvalbumin family.

Its function is as follows. In muscle, parvalbumin is thought to be involved in relaxation after contraction. It binds two calcium ions. The sequence is that of Parvalbumin alpha from Pelophylax lessonae (Pool frog).